Reading from the N-terminus, the 502-residue chain is Lysine--tRNA ligase (502 aa).

Residues glutamate 399 and glutamate 406 each coordinate Mg(2+).

Belongs to the class-II aminoacyl-tRNA synthetase family. As to quaternary structure, homodimer. Mg(2+) is required as a cofactor.

It is found in the cytoplasm. It catalyses the reaction tRNA(Lys) + L-lysine + ATP = L-lysyl-tRNA(Lys) + AMP + diphosphate. The chain is Lysine--tRNA ligase from Synechococcus sp. (strain RCC307).